The primary structure comprises 503 residues: ATP synthase subunit alpha (503 aa).

170-177 provides a ligand contact to ATP; the sequence is GDRKTGKT.

The protein belongs to the ATPase alpha/beta chains family. As to quaternary structure, F-type ATPases have 2 components, CF(1) - the catalytic core - and CF(0) - the membrane proton channel. CF(1) has five subunits: alpha(3), beta(3), gamma(1), delta(1), epsilon(1). CF(0) has four main subunits: a(1), b(1), b'(1) and c(9-12).

It is found in the cellular thylakoid membrane. It catalyses the reaction ATP + H2O + 4 H(+)(in) = ADP + phosphate + 5 H(+)(out). Functionally, produces ATP from ADP in the presence of a proton gradient across the membrane. The alpha chain is a regulatory subunit. The polypeptide is ATP synthase subunit alpha (Synechocystis sp. (strain ATCC 27184 / PCC 6803 / Kazusa)).